Reading from the N-terminus, the 301-residue chain is NTE family protein RssA (301 aa).

The PNPLA domain occupies 8–168 (LALGSGAARG…VNPIPISLTR (161 aa)). Positions 39-43 (GCSIG) match the GXSXG motif. Residue serine 41 is the Nucleophile of the active site. Residue aspartate 155 is the Proton acceptor of the active site. Positions 155-157 (DGA) match the DGA/G motif.

Belongs to the NTE family.

The protein is NTE family protein RssA (rssA) of Escherichia coli (strain K12).